Reading from the N-terminus, the 62-residue chain is Ferredoxin-3 (62 aa).

2 4Fe-4S ferredoxin-type domains span residues 2–28 and 29–62; these read SLKITEECTFCAACEPECPVNAISAGS and DIYVIDESACTECEGYADSPACVAVCPAECIVKA. [4Fe-4S] cluster contacts are provided by Cys9, Cys12, Cys15, Cys19, Cys38, Cys41, Cys50, and Cys54.

Requires [4Fe-4S] cluster as cofactor.

In terms of biological role, ferredoxins are iron-sulfur proteins that transfer electrons in a wide variety of metabolic reactions. This chain is Ferredoxin-3, found in Chlorobaculum tepidum (strain ATCC 49652 / DSM 12025 / NBRC 103806 / TLS) (Chlorobium tepidum).